We begin with the raw amino-acid sequence, 113 residues long: Putative anti-sigma factor antagonist TM_1081 (113 aa).

One can recognise an STAS domain in the interval 1–110 (MFPYKIVDDV…DTISEAMEEV (110 aa)). S55 is subject to Phosphoserine.

It belongs to the anti-sigma-factor antagonist family. Phosphorylated on a serine residue.

In terms of biological role, in the phosphorylated form it could act as an anti-anti-sigma factor that counteracts an anti-sigma factor and thus releases a sigma factor from inhibition. The sequence is that of Putative anti-sigma factor antagonist TM_1081 from Thermotoga maritima (strain ATCC 43589 / DSM 3109 / JCM 10099 / NBRC 100826 / MSB8).